A 154-amino-acid polypeptide reads, in one-letter code: Small ribosomal subunit protein uS9 (154 aa).

The interval 135 to 154 (KESKKYGLKKARKAPQYSKR) is disordered. Residues 140–154 (YGLKKARKAPQYSKR) show a composition bias toward basic residues.

It belongs to the universal ribosomal protein uS9 family.

The sequence is that of Small ribosomal subunit protein uS9 from Salinispora arenicola (strain CNS-205).